The primary structure comprises 155 residues: Small ribosomal subunit protein uS7cz/uS7cy (155 aa).

It belongs to the universal ribosomal protein uS7 family. In terms of assembly, part of the 30S ribosomal subunit.

It is found in the plastid. It localises to the chloroplast. In terms of biological role, one of the primary rRNA binding proteins, it binds directly to 16S rRNA where it nucleates assembly of the head domain of the 30S subunit. This chain is Small ribosomal subunit protein uS7cz/uS7cy (rps7-A), found in Atropa belladonna (Belladonna).